A 46-amino-acid polypeptide reads, in one-letter code: Protein PsbN (46 aa).

A helical membrane pass occupies residues 10–30; the sequence is IAITILIVLLGLTAFGVYTAF.

Belongs to the PsbN family.

Its subcellular location is the cellular thylakoid membrane. Functionally, may play a role in photosystem I and II biogenesis. This Prochlorococcus marinus (strain SARG / CCMP1375 / SS120) protein is Protein PsbN.